The following is a 235-amino-acid chain: Uridylate kinase (235 aa).

8–11 (KFSG) provides a ligand contact to ATP. An involved in allosteric activation by GTP region spans residues 16–21 (GKEGYG). Glycine 50 is a UMP binding site. Positions 51 and 55 each coordinate ATP. UMP is bound by residues aspartate 71 and 132-139 (TGNPYFTT). Residues threonine 159, tyrosine 165, and aspartate 168 each contribute to the ATP site.

Belongs to the UMP kinase family. In terms of assembly, homohexamer.

The protein resides in the cytoplasm. The catalysed reaction is UMP + ATP = UDP + ADP. It functions in the pathway pyrimidine metabolism; CTP biosynthesis via de novo pathway; UDP from UMP (UMPK route): step 1/1. Allosterically activated by GTP. Inhibited by UTP. Its function is as follows. Catalyzes the reversible phosphorylation of UMP to UDP. The chain is Uridylate kinase from Sulfurovum sp. (strain NBC37-1).